The chain runs to 363 residues: NAD(P)H-quinone oxidoreductase subunit 1, chloroplastic (363 aa).

8 helical membrane-spanning segments follow: residues 30–50 (LFPI…IVWL), 98–118 (FSIG…VIPF), 127–147 (LSIG…GLLM), 165–185 (AAQS…ISLL), 203–223 (FWGW…ISSL), 248–268 (YSGI…LVSS), 300–320 (VFGT…FLFI), and 336–356 (LLNL…LLTT).

Belongs to the complex I subunit 1 family. NDH is composed of at least 16 different subunits, 5 of which are encoded in the nucleus.

The protein resides in the plastid. The protein localises to the chloroplast thylakoid membrane. The enzyme catalyses a plastoquinone + NADH + (n+1) H(+)(in) = a plastoquinol + NAD(+) + n H(+)(out). It carries out the reaction a plastoquinone + NADPH + (n+1) H(+)(in) = a plastoquinol + NADP(+) + n H(+)(out). In terms of biological role, NDH shuttles electrons from NAD(P)H:plastoquinone, via FMN and iron-sulfur (Fe-S) centers, to quinones in the photosynthetic chain and possibly in a chloroplast respiratory chain. The immediate electron acceptor for the enzyme in this species is believed to be plastoquinone. Couples the redox reaction to proton translocation, and thus conserves the redox energy in a proton gradient. This Nicotiana tomentosiformis (Tobacco) protein is NAD(P)H-quinone oxidoreductase subunit 1, chloroplastic.